The primary structure comprises 176 residues: NAD(P)H-quinone oxidoreductase subunit 6, chloroplastic (176 aa).

5 helical membrane-spanning segments follow: residues 10–30 (ILLV…VLLT), 32–52 (PIYS…FHIP), 61–81 (AQLL…VMFM), 107–127 (ILFS…IWTT), and 152–172 (FYLP…GAIA).

Belongs to the complex I subunit 6 family. In terms of assembly, NDH is composed of at least 16 different subunits, 5 of which are encoded in the nucleus.

The protein localises to the plastid. It is found in the chloroplast thylakoid membrane. The enzyme catalyses a plastoquinone + NADH + (n+1) H(+)(in) = a plastoquinol + NAD(+) + n H(+)(out). The catalysed reaction is a plastoquinone + NADPH + (n+1) H(+)(in) = a plastoquinol + NADP(+) + n H(+)(out). Its function is as follows. NDH shuttles electrons from NAD(P)H:plastoquinone, via FMN and iron-sulfur (Fe-S) centers, to quinones in the photosynthetic chain and possibly in a chloroplast respiratory chain. The immediate electron acceptor for the enzyme in this species is believed to be plastoquinone. Couples the redox reaction to proton translocation, and thus conserves the redox energy in a proton gradient. This Calycanthus floridus var. glaucus (Eastern sweetshrub) protein is NAD(P)H-quinone oxidoreductase subunit 6, chloroplastic (ndhG).